The following is a 244-amino-acid chain: MNPQLSPKAIREIREGTCNPLGAPQVTTDLSENIILTSLDDLHNWARLSSLWPLLYGTACCFIEFAALIGSRFDFDRFGLVPRSSPRQADLLIVAGTVTMKMAPALVRLYEQMPEPKYVIAMGACTITGGMFSADSTTAVRGVDKLIPVDLYLPGCPPRPEAIFDAVIKLRKKVGNESILERTKTEQTHRYITSDHEMNLVFSENTGEYLNKTSANSIPSSKKEKITELPDNNEKAEIIDTLEN.

[4Fe-4S] cluster is bound by residues cysteine 60, cysteine 61, cysteine 125, and cysteine 156. Residues 213–244 (TSANSIPSSKKEKITELPDNNEKAEIIDTLEN) form a disordered region. Over residues 221–238 (SKKEKITELPDNNEKAEI) the composition is skewed to basic and acidic residues.

Belongs to the complex I 20 kDa subunit family. NDH-1 can be composed of about 15 different subunits; different subcomplexes with different compositions have been identified which probably have different functions. [4Fe-4S] cluster serves as cofactor.

The protein localises to the cellular thylakoid membrane. The catalysed reaction is a plastoquinone + NADH + (n+1) H(+)(in) = a plastoquinol + NAD(+) + n H(+)(out). It catalyses the reaction a plastoquinone + NADPH + (n+1) H(+)(in) = a plastoquinol + NADP(+) + n H(+)(out). Functionally, NDH-1 shuttles electrons from an unknown electron donor, via FMN and iron-sulfur (Fe-S) centers, to quinones in the respiratory and/or the photosynthetic chain. The immediate electron acceptor for the enzyme in this species is believed to be plastoquinone. Couples the redox reaction to proton translocation, and thus conserves the redox energy in a proton gradient. Cyanobacterial NDH-1 also plays a role in inorganic carbon-concentration. The chain is NAD(P)H-quinone oxidoreductase subunit K from Prochlorococcus marinus (strain MIT 9301).